The chain runs to 147 residues: Echinoidin (147 aa).

The region spanning 1 to 143 is the C-type lectin domain; that stretch reads GCCPTFWTSF…STRHYLICKL (143 aa). Cystine bridges form between Cys-3/Cys-14, Cys-31/Cys-141, and Cys-116/Cys-132. Ser-38 carries an O-linked (Hex) serine glycan. The Cell attachment site motif lies at 39-41; the sequence is RGD.

As to quaternary structure, homodimer; disulfide-linked. In terms of processing, the identity of the saccharide is not reported in PubMed:3571253, and it is unlikely to be N-acetylgalactosamine. The sugar attached to Ser-38 is represented simply as Hex. Coelemic fluid.

It localises to the secreted. In terms of biological role, role in the defense system of the organism against microorganisms. This lectin is specific for Gal-GalNAc. The protein is Echinoidin of Heliocidaris crassispina (Sea urchin).